Reading from the N-terminus, the 305-residue chain is Virulence plasmid integrase pGP7-D (305 aa).

The Core-binding (CB) domain maps to 13-99 (LTFGEASEIW…CYISFTKFLY (87 aa)). The 177-residue stretch at 127-303 (VKTVSISKKE…GNSSVANIPT (177 aa)) folds into the Tyr recombinase domain. Catalysis depends on residues lysine 188 and arginine 257. The active-site O-(3'-phospho-DNA)-tyrosine intermediate is the tyrosine 289.

The protein belongs to the 'phage' integrase family.

The chain is Virulence plasmid integrase pGP7-D from Chlamydia muridarum (strain MoPn / Nigg).